The following is a 137-amino-acid chain: NTF2-related export protein (137 aa).

One can recognise an NTF2 domain in the interval 19 to 135 (ESKKFMDVYY…YKVKSDRFRY (117 aa)).

In terms of assembly, preferentially binds Ran-GTP.

It localises to the nucleus. In terms of biological role, stimulator of protein export for NES-containing proteins. Also plays a role in the nuclear export of U1 snRNA, tRNA, and mRNA. This Caenorhabditis elegans protein is NTF2-related export protein (nxt-1).